A 311-amino-acid polypeptide reads, in one-letter code: tRNA-cytidine(32) 2-sulfurtransferase (311 aa).

Residues Ser47–Ser52 carry the PP-loop motif motif. [4Fe-4S] cluster-binding residues include Cys122, Cys125, and Cys213.

This sequence belongs to the TtcA family. In terms of assembly, homodimer. Mg(2+) serves as cofactor. [4Fe-4S] cluster is required as a cofactor.

Its subcellular location is the cytoplasm. It carries out the reaction cytidine(32) in tRNA + S-sulfanyl-L-cysteinyl-[cysteine desulfurase] + AH2 + ATP = 2-thiocytidine(32) in tRNA + L-cysteinyl-[cysteine desulfurase] + A + AMP + diphosphate + H(+). It functions in the pathway tRNA modification. In terms of biological role, catalyzes the ATP-dependent 2-thiolation of cytidine in position 32 of tRNA, to form 2-thiocytidine (s(2)C32). The sulfur atoms are provided by the cysteine/cysteine desulfurase (IscS) system. This Escherichia coli (strain K12 / MC4100 / BW2952) protein is tRNA-cytidine(32) 2-sulfurtransferase.